The following is a 101-amino-acid chain: Large ribosomal subunit protein uL23 (101 aa).

The protein belongs to the universal ribosomal protein uL23 family. In terms of assembly, part of the 50S ribosomal subunit. Contacts protein L29, and trigger factor when it is bound to the ribosome.

Functionally, one of the early assembly proteins it binds 23S rRNA. One of the proteins that surrounds the polypeptide exit tunnel on the outside of the ribosome. Forms the main docking site for trigger factor binding to the ribosome. This chain is Large ribosomal subunit protein uL23, found in Corynebacterium efficiens (strain DSM 44549 / YS-314 / AJ 12310 / JCM 11189 / NBRC 100395).